Here is a 426-residue protein sequence, read N- to C-terminus: Elongation factor 1-alpha (426 aa).

Positions 5–221 constitute a tr-type G domain; the sequence is KPHINLAVIG…NALKEPEKPT (217 aa). The tract at residues 14 to 21 is G1; it reads GHIDHGKS. 14 to 21 contacts GTP; sequence GHIDHGKS. Ser-21 serves as a coordination point for Mg(2+). Positions 70–74 are G2; the sequence is GITID. Residues 91-94 form a G3 region; that stretch reads DCPG. GTP is bound by residues 91 to 95 and 146 to 149; these read DCPGH and NKMD. The segment at 146 to 149 is G4; it reads NKMD. Residues 185 to 187 are G5; sequence SAF.

Belongs to the TRAFAC class translation factor GTPase superfamily. Classic translation factor GTPase family. EF-Tu/EF-1A subfamily.

Its subcellular location is the cytoplasm. The enzyme catalyses GTP + H2O = GDP + phosphate + H(+). Functionally, GTP hydrolase that promotes the GTP-dependent binding of aminoacyl-tRNA to the A-site of ribosomes during protein biosynthesis. In Methanocella arvoryzae (strain DSM 22066 / NBRC 105507 / MRE50), this protein is Elongation factor 1-alpha.